Reading from the N-terminus, the 149-residue chain is D-aminoacyl-tRNA deacylase (149 aa).

The Gly-cisPro motif, important for rejection of L-amino acids signature appears at 137 to 138; that stretch reads GP.

This sequence belongs to the DTD family. In terms of assembly, homodimer.

It localises to the cytoplasm. The catalysed reaction is glycyl-tRNA(Ala) + H2O = tRNA(Ala) + glycine + H(+). It catalyses the reaction a D-aminoacyl-tRNA + H2O = a tRNA + a D-alpha-amino acid + H(+). Functionally, an aminoacyl-tRNA editing enzyme that deacylates mischarged D-aminoacyl-tRNAs. Also deacylates mischarged glycyl-tRNA(Ala), protecting cells against glycine mischarging by AlaRS. Acts via tRNA-based rather than protein-based catalysis; rejects L-amino acids rather than detecting D-amino acids in the active site. By recycling D-aminoacyl-tRNA to D-amino acids and free tRNA molecules, this enzyme counteracts the toxicity associated with the formation of D-aminoacyl-tRNA entities in vivo and helps enforce protein L-homochirality. The chain is D-aminoacyl-tRNA deacylase from Anaeromyxobacter dehalogenans (strain 2CP-C).